A 135-amino-acid chain; its full sequence is Large ribosomal subunit protein uL16c (135 aa).

This sequence belongs to the universal ribosomal protein uL16 family. As to quaternary structure, part of the 50S ribosomal subunit.

The protein localises to the plastid. Its subcellular location is the chloroplast. This Morus indica (Mulberry) protein is Large ribosomal subunit protein uL16c.